The following is a 130-amino-acid chain: Small ribosomal subunit protein uS8 (130 aa).

Belongs to the universal ribosomal protein uS8 family. Part of the 30S ribosomal subunit. Contacts proteins S5 and S12.

Its function is as follows. One of the primary rRNA binding proteins, it binds directly to 16S rRNA central domain where it helps coordinate assembly of the platform of the 30S subunit. The polypeptide is Small ribosomal subunit protein uS8 (Nitrosococcus oceani (strain ATCC 19707 / BCRC 17464 / JCM 30415 / NCIMB 11848 / C-107)).